Consider the following 463-residue polypeptide: Interferon-inducible GTPase 5 (463 aa).

The 183-residue stretch at 52 to 234 folds into the IRG-type G domain; sequence TRLEVGVTGE…PMLVTTWEHD (183 aa). GTP-binding positions include 61–68, 86–90, 168–170, and 215–217; these read ESGAGKSS, TGVVE, KVD, and SNL. Phosphoserine is present on residues Ser-246 and Ser-303. The interval 409-438 is disordered; that stretch reads QGEVSLEAAGDNAVEKRSSGEGTSEEAPLS.

Belongs to the TRAFAC class dynamin-like GTPase superfamily. IRG family.

It localises to the cell projection. The protein localises to the cilium. It is found in the flagellum. The protein resides in the lipid droplet. The enzyme catalyses GTP + H2O = GDP + phosphate + H(+). Its function is as follows. Required for sperm motility and therefore male fertility, via positive regulation of spermatozoa fibrous sheath formation. The protein is Interferon-inducible GTPase 5 (Irgc) of Rattus norvegicus (Rat).